A 143-amino-acid chain; its full sequence is MIFDVYSNYYSRHISRPSIGLGIGLVSSITSPIDFGFSASASAENTVKCSWYKETEQGFAKGLRLEYNDIYAMKPGDRIATYFHVYTEEDLNSANPVWYPMKAKILRIPVYEYSSTSPNAHITDVGSDYPIYAWIEHVDDEHR.

This is an uncharacterized protein from Archaeoglobus fulgidus (strain ATCC 49558 / DSM 4304 / JCM 9628 / NBRC 100126 / VC-16).